A 1746-amino-acid chain; its full sequence is Tenascin (1746 aa).

The first 22 residues, 1–22 (MGVVTRLLVGTFLASLALPAQG), serve as a signal peptide directing secretion. The interval 23–185 (GVLKKVIRHK…CEPGWKGPNC (163 aa)) is involved in hexamer formation. Residue N38 is glycosylated (N-linked (GlcNAc...) asparagine). 3 positions are modified to phosphoserine: S65, S70, and S72. The O-linked (Xyl...) (chondroitin sulfate) serine glycan is linked to S72. Residues 118 to 145 (DVKELLSRLEELENLVSSLREQCTSGAG) are a coiled coil. N-linked (GlcNAc...) asparagine glycans are attached at residues N166 and N184. Residues 174 to 186 (CVCEPGWKGPNCS) form the EGF-like 1; incomplete domain. 14 EGF-like domains span residues 187–217 (EPEC…EDCS), 218–249 (QLAC…DCSR), 250–280 (ETCP…EDCN), 281–311 (EPLC…EDCG), 312–342 (ELIC…EDCG), 343–373 (RLAC…ADCS), 374–404 (ERRC…EDCG), 405–435 (ELRC…EDCS), 436–466 (QLRC…YDCS), 467–497 (EMSC…EDCR), 498–528 (ELRC…PDCA), 529–559 (DLAC…KDCG), 560–589 (QRRC…GLDC), and 590–620 (GQRS…GEDC). 42 cysteine pairs are disulfide-bonded: C190–C200, C194–C205, C207–C216, C221–C231, C225–C236, C238–C247, C252–C263, C256–C268, C270–C279, C284–C294, C288–C299, C301–C310, C315–C325, C319–C330, C332–C341, C346–C356, C350–C361, C363–C372, C377–C387, C381–C392, C394–C403, C408–C418, C412–C423, C425–C434, C439–C449, C443–C454, C456–C465, C470–C480, C474–C485, C487–C496, C501–C511, C505–C516, C518–C527, C532–C542, C536–C547, C549–C558, C563–C573, C567–C578, C580–C589, C594–C604, C598–C609, and C611–C620. N327 carries an N-linked (GlcNAc...) asparagine glycan. Fibronectin type-III domains lie at 625–717 (PPKD…TPEG), 718–801 (LKFK…VTTT), 805–894 (APSQ…TGLD), 895–988 (APRN…LDPP), 989–1075 (KDFR…AGEP), 1076–1166 (EIGN…EAEP), 1167–1256 (EVDN…TAMG), 1257–1346 (SPKE…ALDG), 1347–1433 (PSGL…TDLD), and 1434–1522 (SPRD…IGLL). N-linked (GlcNAc...) asparagine glycosylation occurs at N788. T905 is subject to Phosphothreonine. Residues N1034, N1079, and N1121 are each glycosylated (N-linked (GlcNAc...) asparagine). N-linked (GlcNAc...) asparagine glycosylation is present at N1354. The 216-residue stretch at 1520–1735 (GLLYPFPRDC…FAEMKLRPSN (216 aa)) folds into the Fibrinogen C-terminal domain.

The protein belongs to the tenascin family. In terms of assembly, homohexamer; disulfide-linked. A homotrimer may be formed in the triple coiled-coil region and may be stabilized by disulfide rings at both ends. Two of such half-hexabrachions may be disulfide linked within the central globule. Interacts with CSPG4. Interacts (via the 3rd fibronectin type-III domain) with integrin ITGA9:ITGB1. Submaxillary glands and brain.

The protein localises to the secreted. It is found in the extracellular space. It localises to the extracellular matrix. Extracellular matrix protein implicated in guidance of migrating neurons as well as axons during development, synaptic plasticity as well as neuronal regeneration. Promotes neurite outgrowth from cortical neurons grown on a monolayer of astrocytes. Ligand for integrins alpha-8/beta-1, alpha-9/beta-1, alpha-V/beta-3 and alpha-V/beta-6. In tumors, stimulates angiogenesis by elongation, migration and sprouting of endothelial cells. The chain is Tenascin (TNC) from Sus scrofa (Pig).